A 686-amino-acid polypeptide reads, in one-letter code: Putative pentatricopeptide repeat-containing protein At3g49142 (686 aa).

12 PPR repeats span residues 73-103, 104-138, 139-173, 174-204, 205-239, 240-272, 273-307, 308-342, 343-373, 374-408, 409-439, and 445-475; these read NSSLGVKLMRAYASLKDVASARKVFDEIPER, NVIIINVMIRSYVNNGFYGEGVKVFGTMCGCNVRP, DHYTFPCVLKACSCSGTIVIGRKIHGSATKVGLSS, TLFVGNGLVSMYGKCGFLSEARLVLDEMSRR, DVVSWNSLVVGYAQNQRFDDALEVCREMESVKISH, DAGTMASLLPAVSNTTTENVMYVKDMFFKMGKK, SLVSWNVMIGVYMKNAMPVEAVELYSRMEADGFEP, DAVSITSVLPACGDTSALSLGKKIHGYIERKKLIP, NLLLENALIDMYAKCGCLEKARDVFENMKSR, DVVSWTAMISAYGFSGRGCDAVALFSKLQDSGLVP, DSIAFVTTLAACSHAGLLEEGRSCFKLMTDH, and RLEHLACMVDLLGRAGKVKEAYRFIQDMSME. Residues 480–555 form a type E motif region; that stretch reads VWGALLGACR…NPGASNVEVN (76 aa). The type E(+) motif stretch occupies residues 556-586; that stretch reads RIIHTFLVGDRSHPQSDEIYRELDVLVKKMK. Positions 587 to 686 are type DYW motif; it reads ELGYVPDSES…FGVCSCGDYW (100 aa).

Belongs to the PPR family. PCMP-H subfamily.

The polypeptide is Putative pentatricopeptide repeat-containing protein At3g49142 (PCMP-H77) (Arabidopsis thaliana (Mouse-ear cress)).